The sequence spans 272 residues: tRNA uridine(34) hydroxylase (272 aa).

One can recognise a Rhodanese domain in the interval 121 to 217 (SRSDVYTIDT…YFKSTGNINN (97 aa)). Catalysis depends on Cys-177, which acts as the Cysteine persulfide intermediate.

The protein belongs to the TrhO family.

The catalysed reaction is uridine(34) in tRNA + AH2 + O2 = 5-hydroxyuridine(34) in tRNA + A + H2O. Its function is as follows. Catalyzes oxygen-dependent 5-hydroxyuridine (ho5U) modification at position 34 in tRNAs. The sequence is that of tRNA uridine(34) hydroxylase from Ehrlichia ruminantium (strain Welgevonden).